A 761-amino-acid chain; its full sequence is MSRKGPRAEVCADCSAPDPGWASISRGVLVCDECCSVHRSLGRHISIVKHLRHSAWPPTLLQMVHTLASNGANSIWEHSLLDPAQVQSGRRKANPQDKVHPIKSEFIRAKYQMLAFVHKLPCRDDDGVTAKDLSKQLHSSVRTGNLETCLRLLSLGAQANFFHPEKGTTPLHVAAKAGQTLQAELLVVYGADPGSPDVNGRTPIDYARQAGHHELAERLVECQYELTDRLAFYLCGRKPDHKNGHYIIPQMADSLDLSELAKAAKKKLQALSNRLFEELAMDVYDEVDRRENDAVWLATQNHSTLVTERSAVPFLPVNPEYSATRNQGRQKLARFNAREFATLIIDILSEAKRRQQGKSLSSPTDNLELSLRSQSDLDDQHDYDSVASDEDTDQEPLRSTGATRSNRARSMDSSDLSDGAVTLQEYLELKKALATSEAKVQQLMKVNSSLSDELRRLQREIHKLQAENLQLRQPPGPVPTPPLPSERAEHTPMAPGGSTHRRDRQAFSMYEPGSALKPFGGPPGDELTTRLQPFHSTELEDDAIYSVHVPAGLYRIRKGVSASAVPFTPSSPLLSCSQEGSRHTSKLSRHGSGADSDYENTQSGDPLLGLEGKRFLELGKEEDFHPELESLDGDLDPGLPSTEDVILKTEQVTKNIQELLRAAQEFKHDSFVPCSEKIHLAVTEMASLFPKRPALEPVRSSLRLLNASAYRLQSECRKTVPPEPGAPVDFQLLTQQVIQCAYDIAKAAKQLVTITTREKKQ.

The Arf-GAP domain occupies 1–124; that stretch reads MSRKGPRAEV…AFVHKLPCRD (124 aa). The tract at residues 1-124 is interaction with gamma-tubulin and localization to the centrosome; that stretch reads MSRKGPRAEV…AFVHKLPCRD (124 aa). The C4-type zinc finger occupies 11-34; sequence CADCSAPDPGWASISRGVLVCDEC. 3 ANK repeats span residues 132–161, 166–195, and 199–228; these read DLSK…QANF, KGTT…DPGS, and NGRT…ELTD. Residue Tyr-224 is modified to Phosphotyrosine. The interval 245–365 is interaction with PCLO; the sequence is HYIIPQMADS…QGKSLSSPTD (121 aa). Residues 253–415 are interaction with PTK2/FAK1; sequence DSLDLSELAK…NRARSMDSSD (163 aa). The interaction with ARHGEF7 stretch occupies residues 254 to 367; the sequence is SLDLSELAKA…KSLSSPTDNL (114 aa). Residues 354–416 are disordered; it reads RQQGKSLSSP…RARSMDSSDL (63 aa). Residues 357-374 show a composition bias toward polar residues; it reads GKSLSSPTDNLELSLRSQ. Residues Ser-359 and Ser-362 each carry the phosphoserine modification. Thr-364 is modified (phosphothreonine). The segment at 366–587 is interaction with NCK2 and GRIN3A; it reads NLELSLRSQS…QEGSRHTSKL (222 aa). The tract at residues 366 to 587 is required for localization at synapses; the sequence is NLELSLRSQS…QEGSRHTSKL (222 aa). Ser-370 and Ser-375 each carry phosphoserine. Tyr-383 carries the phosphotyrosine modification. Residues Ser-385 and Ser-388 each carry the phosphoserine modification. Positions 385 to 394 are enriched in acidic residues; it reads SVASDEDTDQ. Thr-392 carries the post-translational modification Phosphothreonine. A phosphoserine mark is found at Ser-410, Ser-413, and Ser-417. The segment at 411–466 is interaction with MAPK1; it reads MDSSDLSDGAVTLQEYLELKKALATSEAKVQQLMKVNSSLSDELRRLQREIHKLQA. The tract at residues 420–620 is interaction with IKBKG; it reads AVTLQEYLEL…EGKRFLELGK (201 aa). Residues 440–474 adopt a coiled-coil conformation; sequence VQQLMKVNSSLSDELRRLQREIHKLQAENLQLRQP. The interval 471-501 is disordered; it reads LRQPPGPVPTPPLPSERAEHTPMAPGGSTHR. The span at 474–484 shows a compositional bias: pro residues; it reads PPGPVPTPPLP. Thr-480 is modified (phosphothreonine). 2 positions are modified to phosphoserine: Ser-498 and Ser-536. Thr-537 carries the phosphothreonine modification. 2 positions are modified to phosphotyrosine: Tyr-545 and Tyr-554. Residues Ser-561, Ser-571, Ser-592, and Ser-596 each carry the phosphoserine modification. The segment at 572 to 606 is disordered; it reads PLLSCSQEGSRHTSKLSRHGSGADSDYENTQSGDP. Thr-601 carries the post-translational modification Phosphothreonine. Ser-630 is modified (phosphoserine). The segment at 637–761 is interaction with PXN and TGFB1I1; that stretch reads PGLPSTEDVI…VTITTREKKQ (125 aa).

Forms homodimers and possibly oligomers. May forms heterooligomers with GIT2. Interacts with G protein-coupled receptor kinases, including GRK2, GRK3, GRK5 and GRK6. Interacts with PPFIA1, PPFIA2 and PPFIA4. Interacts with GRIP1 and forms a ternary complex with PPFIA1 and GRIP1. Directly interacts with ARHGEF7/beta-PIX, forming in vitro a heptameric complex made of a GIT1 dimer and an ARHGEF7 trimer. Directly interacts with PXN/paxillin; this interaction is enhanced in the presence of ARHGEF7. Directly interacts (via C-terminus) with TGFB1I1/Hic-5 (via LD motif 3). Directly interacts with PTK2/FAK1. May interact with PTK2B/PYK2; this interaction may be indirect. Interacts with AMPA receptors GRIA2/3. Directly interacts with protein Piccolo/PCLO. Forms a complex with Ephrin-B1/EFNB1 and NCK2/GRB4 (via SH2); this interaction is important for spine morphogenesis and synapse formation. Interaction with NCK2 is transient and depends upon GIT1 phosphorylation at Tyr-383. Interacts with GRIN3A/GluN3A (via C-terminus); this interaction competes with GIT1 interaction with ARHGEF7 and limits synaptic localization of GIT1. Interacts with IKBKG/NEMO in resting bone mesenchymal stem cells, as well as in TNF-stimulated cells; this interaction may increase IKBKG affinity for 'Lys-63'-linked polyubiquitin chains. Interacts with GABA(A) receptors, including GABRB3 and GABRG2. Interacts with SCRIB. Interacts (via N- and C-terminus) with ENTR1/SDCCAG3 (via N-terminus); this interaction is direct. May form a tripartite complex with ENTR1 and PTPN13. Interacts with YWHAZ. Interacts with PAK1. Interacts with PAK3. Directly interacts (via N-terminus) with gamma-tubulin. Interacts with MAPK1 and MAPK3; this interaction is required for MAPK1/3 recruitment to focal adhesions. Post-translationally, phosphorylated by PAK1. Phosphorylation on tyrosine residues may be catalyzed by PTK2/FAK1 and SRC in growing fibroblasts. Phosphorylation at Tyr-383 is induced by activation of Ephrin-B1/EFNB1 and catalyzed by SRC family kinases. It is required for the interaction with NCK2 and for GIT1 recruitment to synapses in hippocampal neurons.

It is found in the cytoplasm. It localises to the synapse. The protein localises to the presynapse. The protein resides in the postsynapse. Its subcellular location is the postsynaptic density. It is found in the cell junction. It localises to the focal adhesion. The protein localises to the cell projection. The protein resides in the lamellipodium. Its subcellular location is the cytoskeleton. It is found in the microtubule organizing center. It localises to the centrosome. The protein localises to the spindle pole. Functionally, GTPase-activating protein for ADP ribosylation factor family members, including ARF1. Multidomain scaffold protein that interacts with numerous proteins and therefore participates in many cellular functions, including receptor internalization, focal adhesion remodeling, and signaling by both G protein-coupled receptors and tyrosine kinase receptors. Through PAK1 activation, positively regulates microtubule nucleation during interphase. Plays a role in the regulation of cytokinesis; for this function, may act in a pathway also involving ENTR1 and PTPN13. May promote cell motility both by regulating focal complex dynamics and by local activation of RAC1. May act as scaffold for MAPK1/3 signal transduction in focal adhesions. Recruits MAPK1/3/ERK1/2 to focal adhesions after EGF stimulation via a Src-dependent pathway, hence stimulating cell migration. Plays a role in brain development and function. Involved in the regulation of spine density and synaptic plasticity that is required for processes involved in learning. Plays an important role in dendritic spine morphogenesis and synapse formation. In hippocampal neurons, recruits guanine nucleotide exchange factors (GEFs), such as ARHGEF7/beta-PIX, to the synaptic membrane. These in turn locally activate RAC1, which is an essential step for spine morphogenesis and synapse formation. May contribute to the organization of presynaptic active zones through oligomerization and formation of a Piccolo/PCLO-based protein network, which includes ARHGEF7/beta-PIX and FAK1. In neurons, through its interaction with liprin-alpha family members, may be required for AMPA receptor (GRIA2/3) proper targeting to the cell membrane. In complex with GABA(A) receptors and ARHGEF7, plays a crucial role in regulating GABA(A) receptor synaptic stability, maintaining GPHN/gephyrin scaffolds and hence GABAergic inhibitory synaptic transmission, by locally coordinating RAC1 and PAK1 downstream effector activity, leading to F-actin stabilization. May also be important for RAC1 downstream signaling pathway through PAK3 and regulation of neuronal inhibitory transmission at presynaptic input. Required for successful bone regeneration during fracture healing. The function in intramembranous ossification may, at least partly, exerted by macrophages in which GIT1 is a key negative regulator of redox homeostasis, IL1B production, and glycolysis, acting through the ERK1/2/NRF2/NFE2L2 axis. May play a role in angiogenesis during fracture healing. In this process, may regulate activation of the canonical NF-kappa-B signal in bone mesenchymal stem cells by enhancing the interaction between NEMO and 'Lys-63'-ubiquitinated RIPK1/RIP1, eventually leading to enhanced production of VEGFA and others angiogenic factors. Essential for VEGF signaling through the activation of phospholipase C-gamma and ERK1/2, hence may control endothelial cell proliferation and angiogenesis. In Homo sapiens (Human), this protein is ARF GTPase-activating protein GIT1 (GIT1).